Here is a 277-residue protein sequence, read N- to C-terminus: Large ribosomal subunit protein uL2 (277 aa).

The interval 222-277 is disordered; sequence GVTMNPVDHPHGGGEGRTSGGRNPVTPWGFPTKGKKTRNNKATDKFIVSSRHKRKK.

It belongs to the universal ribosomal protein uL2 family. In terms of assembly, part of the 50S ribosomal subunit. Forms a bridge to the 30S subunit in the 70S ribosome.

Its function is as follows. One of the primary rRNA binding proteins. Required for association of the 30S and 50S subunits to form the 70S ribosome, for tRNA binding and peptide bond formation. It has been suggested to have peptidyltransferase activity; this is somewhat controversial. Makes several contacts with the 16S rRNA in the 70S ribosome. The polypeptide is Large ribosomal subunit protein uL2 (Xanthobacter autotrophicus (strain ATCC BAA-1158 / Py2)).